Reading from the N-terminus, the 3498-residue chain is Mediator of RNA polymerase II transcription subunit 12 (3498 aa).

Disordered regions lie at residues Ile-365–Ile-456, Gly-497–Lys-764, Ala-2209–Lys-2576, Glu-2589–Ala-2620, Leu-2637–Gln-2889, and Asn-2917–Tyr-3498. Positions His-368 to Lys-394 are enriched in basic residues. The segment covering Ser-404–Pro-416 has biased composition (basic and acidic residues). Composition is skewed to polar residues over residues Gly-424–Tyr-440 and Ser-512–Pro-536. Positions Ser-539–Lys-570 form a coiled coil. Basic and acidic residues-rich tracts occupy residues Val-540–Asp-578 and Ala-593–Glu-614. Low complexity predominate over residues Ser-621 to Ala-630. Composition is skewed to basic and acidic residues over residues Glu-691 to Asp-719, Glu-738 to Lys-764, and Ala-2209 to Ser-2285. Residues Gln-2142–Tyr-3498 form a required for nuclear localization region. Residues Val-2203–Ala-2290 are a coiled coil. 2 stretches are compositionally biased toward low complexity: residues Arg-2342 to Ala-2360 and Leu-2409 to Pro-2431. Residues Arg-2395–Asn-2420 are a coiled coil. Polar residues predominate over residues Gln-2444–Gln-2456. The span at Gln-2459–Ser-2479 shows a compositional bias: low complexity. Residues Asn-2514–Glu-2530 are compositionally biased toward polar residues. Basic and acidic residues-rich tracts occupy residues Gln-2547–Lys-2576, Glu-2589–Glu-2616, and Leu-2637–Arg-2724. The segment covering Arg-2725–Pro-2770 has biased composition (low complexity). Over residues Ser-2771–Tyr-2783 the composition is skewed to polar residues. Low complexity predominate over residues Gln-2784–Ser-2810. Polar residues-rich tracts occupy residues Asn-2816–Asn-2827, Arg-2842–Gln-2852, His-2868–Leu-2881, and Gly-2926–Pro-2956. Residues Gln-2957 to Gln-2993 show a composition bias toward low complexity. Polar residues predominate over residues Tyr-2994–Asp-3009. The span at Gly-3039 to Gln-3100 shows a compositional bias: low complexity. Residues Arg-3103 to Asp-3127 are compositionally biased toward polar residues. 2 stretches are compositionally biased toward low complexity: residues Gln-3128–Tyr-3184 and Gln-3192–Gln-3223. A compositionally biased stretch (polar residues) spans Ser-3231–Leu-3253. Over residues Asn-3254–Gln-3311 the composition is skewed to low complexity. Residues Ser-3312–Gln-3321 are compositionally biased toward gly residues. Composition is skewed to low complexity over residues Gln-3336–Gly-3356 and Gln-3370–Gln-3408. The segment covering Pro-3414–Asn-3425 has biased composition (polar residues). Over residues Gln-3426–Gln-3436 the composition is skewed to low complexity. The segment covering Gln-3437–Gly-3446 has biased composition (gly residues). Residues Gln-3447 to Tyr-3498 show a composition bias toward low complexity.

It belongs to the Mediator complex subunit 12 family. In terms of assembly, component of the Mediator complex. Ubiquitously expressed.

The protein localises to the nucleus. Component of the Mediator complex, a coactivator involved in regulated gene transcription of nearly all RNA polymerase II-dependent genes. Mediator functions as a bridge to convey information from gene-specific regulatory proteins to the basal RNA polymerase II transcription machinery. Mediator is recruited to promoters by direct interactions with regulatory proteins and serves as a scaffold for the assembly of a functional preinitiation complex with RNA polymerase II and the general transcription factors. Functions downstream of let-60 during vulval induction. Required for asymmetric division of T-cells and for hypodermal development. The protein is Mediator of RNA polymerase II transcription subunit 12 (dpy-22) of Caenorhabditis elegans.